Reading from the N-terminus, the 464-residue chain is Methionine aminopeptidase 2 (464 aa).

A disordered region spans residues 1–86 (MGSKTPGNHR…RKKKKKNTKE (86 aa)). Residues 43 to 54 (GESEGGEDEDDD) are compositionally biased toward acidic residues. The segment covering 72–83 (KRNKRRKKKKKN) has biased composition (basic residues). A substrate-binding site is contributed by histidine 216. A divalent metal cation is bound by residues aspartate 237, aspartate 248, and histidine 317. Histidine 325 is a substrate binding site. The a divalent metal cation site is built by glutamate 350 and glutamate 445.

This sequence belongs to the peptidase M24A family. Methionine aminopeptidase eukaryotic type 2 subfamily. Requires Co(2+) as cofactor. Zn(2+) serves as cofactor. Mn(2+) is required as a cofactor. It depends on Fe(2+) as a cofactor.

The protein resides in the cytoplasm. It carries out the reaction Release of N-terminal amino acids, preferentially methionine, from peptides and arylamides.. In terms of biological role, cotranslationally removes the N-terminal methionine from nascent proteins. The N-terminal methionine is often cleaved when the second residue in the primary sequence is small and uncharged (Met-Ala-, Cys, Gly, Pro, Ser, Thr, or Val). The protein is Methionine aminopeptidase 2 of Ajellomyces capsulatus (strain NAm1 / WU24) (Darling's disease fungus).